We begin with the raw amino-acid sequence, 370 residues long: Dual-specificity RNA methyltransferase RlmN (370 aa).

Glu93 acts as the Proton acceptor in catalysis. Residues 99 to 337 (EEGRGTLCVS…VTTVRKTRGD (239 aa)) form the Radical SAM core domain. The cysteines at positions 106 and 343 are disulfide-linked. [4Fe-4S] cluster-binding residues include Cys113, Cys117, and Cys120. S-adenosyl-L-methionine-binding positions include 167–168 (GE), Ser199, 221–223 (SLH), and Asn300. Residue Cys343 is the S-methylcysteine intermediate of the active site.

The protein belongs to the radical SAM superfamily. RlmN family. [4Fe-4S] cluster serves as cofactor.

Its subcellular location is the cytoplasm. The enzyme catalyses adenosine(2503) in 23S rRNA + 2 reduced [2Fe-2S]-[ferredoxin] + 2 S-adenosyl-L-methionine = 2-methyladenosine(2503) in 23S rRNA + 5'-deoxyadenosine + L-methionine + 2 oxidized [2Fe-2S]-[ferredoxin] + S-adenosyl-L-homocysteine. It carries out the reaction adenosine(37) in tRNA + 2 reduced [2Fe-2S]-[ferredoxin] + 2 S-adenosyl-L-methionine = 2-methyladenosine(37) in tRNA + 5'-deoxyadenosine + L-methionine + 2 oxidized [2Fe-2S]-[ferredoxin] + S-adenosyl-L-homocysteine. Specifically methylates position 2 of adenine 2503 in 23S rRNA and position 2 of adenine 37 in tRNAs. m2A2503 modification seems to play a crucial role in the proofreading step occurring at the peptidyl transferase center and thus would serve to optimize ribosomal fidelity. This chain is Dual-specificity RNA methyltransferase RlmN, found in Francisella philomiragia subsp. philomiragia (strain ATCC 25017 / CCUG 19701 / FSC 153 / O#319-036).